Here is a 123-residue protein sequence, read N- to C-terminus: Probable histone H2B 3 (123 aa).

The tract at residues 1–31 (MAPPKPSAKGAKKAAKTVSKPKDGKKRKHAR) is disordered. Ser110 is a glycosylation site (O-linked (GlcNAc) serine). Residue Lys118 forms a Glycyl lysine isopeptide (Lys-Gly) (interchain with G-Cter in ubiquitin) linkage.

Belongs to the histone H2B family. The nucleosome is a histone octamer containing two molecules each of H2A, H2B, H3 and H4 assembled in one H3-H4 heterotetramer and two H2A-H2B heterodimers. The octamer wraps approximately 147 bp of DNA. In terms of processing, monoubiquitination of Lys-118 gives a specific tag for epigenetic transcriptional activation and is also prerequisite for histone H3 'Lys-4' and 'Lys-79' methylation. GlcNAcylation at Ser-110 promotes monoubiquitination of Lys-118. It fluctuates in response to extracellular glucose, and associates with transcribed genes.

Its subcellular location is the nucleus. It is found in the chromosome. In terms of biological role, core component of nucleosome. Nucleosomes wrap and compact DNA into chromatin, limiting DNA accessibility to the cellular machineries which require DNA as a template. Histones thereby play a central role in transcription regulation, DNA repair, DNA replication and chromosomal stability. DNA accessibility is regulated via a complex set of post-translational modifications of histones, also called histone code, and nucleosome remodeling. This is Probable histone H2B 3 (his-41) from Caenorhabditis elegans.